The chain runs to 332 residues: Large ribosomal subunit protein mL44 (332 aa).

A mitochondrion-targeting transit peptide spans 1–30 (MASGLVRLLQQGHRCLLAPVAPKLVPPVRG). Residues 86–228 (DLLKTAFVNS…LITQMTGKEL (143 aa)) enclose the RNase III domain. A DRBM domain is found at 236–306 (NPMGLLVEEL…ARVALRKLYG (71 aa)).

This sequence belongs to the ribonuclease III family. Mitochondrion-specific ribosomal protein mL44 subfamily. Component of the mitochondrial large ribosomal subunit (mt-LSU). Mature mammalian 55S mitochondrial ribosomes consist of a small (28S) and a large (39S) subunit. The 28S small subunit contains a 12S ribosomal RNA (12S mt-rRNA) and 30 different proteins. The 39S large subunit contains a 16S rRNA (16S mt-rRNA), a copy of mitochondrial valine transfer RNA (mt-tRNA(Val)), which plays an integral structural role, and 52 different proteins.

The protein localises to the mitochondrion. Functionally, component of the 39S subunit of mitochondrial ribosome. May have a function in the assembly/stability of nascent mitochondrial polypeptides exiting the ribosome. The polypeptide is Large ribosomal subunit protein mL44 (MRPL44) (Homo sapiens (Human)).